A 232-amino-acid chain; its full sequence is DOA4-independent degradation protein 4 (232 aa).

Positions 14 to 97 form a coiled coil; that stretch reads PQERLKKNQR…AISLRIQAVR (84 aa). The interval 183 to 232 is interaction with VPS4; sequence LQSTPQNLVSNAPIAETAMGIPEPIGAGSEFHGNPDDDLQARLNTLKKQT. The segment at 203–232 is disordered; it reads IPEPIGAGSEFHGNPDDDLQARLNTLKKQT. The short motif at 219 to 229 is the MIT-interacting motif element; the sequence is DDLQARLNTLK.

This sequence belongs to the SNF7 family. In terms of assembly, core component of the ESCRT-III complex (endosomal sorting required for transport complex III). ESCRT-III appears to be sequentially assembled as a flat lattice on the endosome membrane and forms a transient 450 kDa complex that contains DID4, oligomerized SNF7, VPS20 and VPS24. SNF7 oligomerization into a membrane-associated filament is nucleated by association of SNF7 with VPS20; the process is terminated through association of VPS24, possibly by capping the SNF7 filament. VPS24 subsequently associates with DID4/VPS2.

The protein localises to the cytoplasm. It is found in the endosome membrane. Required for the sorting and concentration of proteins resulting in the entry of these proteins into the invaginating vesicles of the multivesicular body (MVB). Acts a component of the ESCRT-III complex, which appears to be critical for late steps in MVB sorting, such as membrane invagination and final cargo sorting and recruitment of late-acting components of the sorting machinery. The MVB pathway requires the sequential function of ESCRT-O, -I,-II and -III complex assemblies. Can directly stimulate VPS4 ATPase activity. The DID4/VPS2-VPS24 subcomplex is required for the VPS4-dependent dissociation of ESCRT-III. The polypeptide is DOA4-independent degradation protein 4 (DID4) (Saccharomyces cerevisiae (strain ATCC 204508 / S288c) (Baker's yeast)).